The following is an 894-amino-acid chain: LRR receptor-like serine/threonine-protein kinase IOS1 (894 aa).

The N-terminal stretch at 1-23 (MAFSSCFLLVLLQIFSALLLCLA) is a signal peptide. The Extracellular segment spans residues 24–515 (QDQSGFISLD…KKKKNTVIAP (492 aa)). 14 N-linked (GlcNAc...) asparagine glycosylation sites follow: Asn48, Asn95, Asn137, Asn179, Asn223, Asn230, Asn260, Asn287, Asn309, Asn338, Asn399, Asn441, Asn462, and Asn469. 2 LRR repeats span residues 431 to 457 (LTSL…NMET) and 459 to 479 (KLIN…LLDK). A helical transmembrane segment spans residues 516–536 (VAASLVSVFLIGAGIVTFLIL). Topologically, residues 537–894 (KRKKRTKLGL…FTTELNPGAR (358 aa)) are cytoplasmic. Thr577 is modified (phosphothreonine). The Protein kinase domain occupies 586–858 (NNFERVLGRG…QVVMDLKECL (273 aa)). Residues 592–600 (LGRGGFGVV) and Lys613 contribute to the ATP site. A Phosphotyrosine modification is found at Tyr658. Asp710 serves as the catalytic Proton acceptor. Position 744 is a phosphoserine (Ser744). Phosphothreonine occurs at positions 745 and 750. Phosphotyrosine is present on Tyr758.

The protein belongs to the protein kinase superfamily. Ser/Thr protein kinase family. In terms of assembly, homodimerization. Interacts with BAK1 and FLS2; triggers FLS2-BAK1 complex formation upon microbe-associated molecular patterns (MAMPs) treatment. Also binds to CERK1 and EFR. As to expression, expressed in roots, cotyledons, leaves, flowers and siliques.

The protein localises to the cell membrane. Negatively regulates the abscisic acid (ABA) signaling pathway. Required for full susceptibility to filamentous (hemi)biotrophic oomycetes (e.g. H.arabidopsidis and P.parasitica) and fungal (e.g. E.cruciferarum) pathogens, probably by triggering the repression of ABA-sensitive COLD REGULATED and RESISTANCE TO DESICCATION genes during infection, but independently of immune responses. Involved in BAK1-dependent and BAK1-independent microbe-associated molecular patterns (MAMPs)-triggered immunity (PTI) leading to defense responses, including callose deposition and MAPK cascade activation, toward pathogenic bacteria (e.g. P.syringae). Required for chitin-mediated PTI. The sequence is that of LRR receptor-like serine/threonine-protein kinase IOS1 from Arabidopsis thaliana (Mouse-ear cress).